The chain runs to 84 residues: Exodeoxyribonuclease 7 small subunit (84 aa).

It belongs to the XseB family. As to quaternary structure, heterooligomer composed of large and small subunits.

The protein resides in the cytoplasm. It catalyses the reaction Exonucleolytic cleavage in either 5'- to 3'- or 3'- to 5'-direction to yield nucleoside 5'-phosphates.. Its function is as follows. Bidirectionally degrades single-stranded DNA into large acid-insoluble oligonucleotides, which are then degraded further into small acid-soluble oligonucleotides. The chain is Exodeoxyribonuclease 7 small subunit from Janthinobacterium sp. (strain Marseille) (Minibacterium massiliensis).